Reading from the N-terminus, the 179-residue chain is MAKLHDKYKETVSPELVTKFGFTSVMQVPRIEKITLNMGVGEAVADKKVMEHALRDMTAIAGQKPVVTVARKSVAGFKIREGYPIGCKVTLRGERMWEFLERLVDIAIPRIRDFRGLSVKSFDGRGNYAMGVREQIIFPEIQYDKIDKIRGMDIVITTSAKNDEEGRALLEGFNFPFKK.

The protein belongs to the universal ribosomal protein uL5 family. As to quaternary structure, part of the 50S ribosomal subunit; part of the 5S rRNA/L5/L18/L25 subcomplex. Contacts the 5S rRNA and the P site tRNA. Forms a bridge to the 30S subunit in the 70S ribosome.

This is one of the proteins that bind and probably mediate the attachment of the 5S RNA into the large ribosomal subunit, where it forms part of the central protuberance. In the 70S ribosome it contacts protein S13 of the 30S subunit (bridge B1b), connecting the 2 subunits; this bridge is implicated in subunit movement. Contacts the P site tRNA; the 5S rRNA and some of its associated proteins might help stabilize positioning of ribosome-bound tRNAs. The sequence is that of Large ribosomal subunit protein uL5 from Shewanella pealeana (strain ATCC 700345 / ANG-SQ1).